A 51-amino-acid chain; its full sequence is Micropeptide inhibiting actin cytoskeleton (51 aa).

Positions 1–22 (MERAGVPGFSPRRSSVEAKMQS) are disordered.

Interacts with aquaporin AQP2.

Its function is as follows. Reduces filamentous actin fibers by interacting with aquaporin AQP2 which leads to inhibition of the expression of SEPTIN4 and integrin ITGB4. Also inhibits the activation of the EREG/EGFR signaling pathway through interaction with AQP2. This chain is Micropeptide inhibiting actin cytoskeleton, found in Homo sapiens (Human).